The following is a 402-amino-acid chain: Omega-3 fatty acid desaturase fat-1 (402 aa).

4 consecutive transmembrane segments (helical) span residues 79–99 (LVQDFAALTILYFALPAFEYF), 101–121 (LFGYLVWNIFMGVFGFALFVV), 235–255 (CVISGICCCVCAYIALTIAGS), and 260–280 (FWYYWVPLSFFGLMLVIVTYL).

Belongs to the fatty acid desaturase type 1 family.

It is found in the membrane. The enzyme catalyses (9Z,12Z)-octadecadienoyl-CoA + 2 Fe(II)-[cytochrome b5] + O2 + 2 H(+) = (9Z,12Z,15Z)-octadecatrienoyl-CoA + 2 Fe(III)-[cytochrome b5] + 2 H2O. It carries out the reaction (8Z,11Z,14Z)-eicosatrienoyl-CoA + 2 Fe(II)-[cytochrome b5] + O2 + 2 H(+) = (8Z,11Z,14Z,17Z)-eicosatetraenoyl-CoA + 2 Fe(III)-[cytochrome b5] + 2 H2O. The catalysed reaction is (5Z,8Z,11Z,14Z)-eicosatetraenoyl-CoA + 2 Fe(II)-[cytochrome b5] + O2 + 2 H(+) = (5Z,8Z,11Z,14Z,17Z)-eicosapentaenoyl-CoA + 2 Fe(III)-[cytochrome b5] + 2 H2O. It catalyses the reaction (7Z,10Z,13Z,16Z)-docosatetraenoyl-CoA + 2 Fe(II)-[cytochrome b5] + O2 + 2 H(+) = (7Z,10Z,13Z,16Z,19Z)-docosapentaenoyl-CoA + 2 Fe(III)-[cytochrome b5] + 2 H2O. The enzyme catalyses (6Z,9Z,12Z)-octadecatrienoyl-CoA + 2 Fe(II)-[cytochrome b5] + O2 + 2 H(+) = (6Z,9Z,12Z,15Z)-octadecatetraenoyl-CoA + 2 Fe(III)-[cytochrome b5] + 2 H2O. Its pathway is lipid metabolism; polyunsaturated fatty acid biosynthesis. Its function is as follows. Omega-3 fatty acid desaturase that recognizes a range of 18- and 20-carbon omega-6 substrates. Introduces a double bond in the fatty acid chain three carbons away from terminal methyl group to biosynthesize n-3 (omega-3) polyunsaturated fatty acids (PUFAs) endogenously (PUFAs are essential for membrane structure and many cellular and physiological processes). Acts on a number of substrates like linoleoyl-CoA ((9Z,12Z)-octadecadienoyl-CoA, 18:2n-6), dihomo-gamma-linolenoyl-CoA ((8Z,11Z,14Z)-eicosatrienoyl-CoA, 20:3n-6), and arachidonoyl-CoA ((5Z,8Z,11Z,14Z)-eicosatetraenoyl-CoA, 20:4n-6), to generate alpha-linolenoyl-CoA ((9Z,12Z,15Z)-octadecatrienoyl-CoA, 18:3n-3), (8Z,11Z,14Z,17Z)-eicosatetraenoyl-CoA (20:4n-3) and (5Z,8Z,11Z,14Z,17Z)-eicosapentaenoyl-CoA (20:5n-3) respectively. Unlike plants, Caenorhabditis elegans desaturases seem to use fatty acyl-CoAs as substrates. In Caenorhabditis elegans, this protein is Omega-3 fatty acid desaturase fat-1 (fat-1).